The primary structure comprises 499 residues: E3 ubiquitin-protein ligase TRIM69 (499 aa).

Residues Met-1–Gln-152 are necessary for nuclear localization. The segment at Cys-41–Lys-82 adopts an RING-type zinc-finger fold. A coiled-coil region spans residues Phe-160 to Asn-265. Positions Pro-305 to Gln-499 constitute a B30.2/SPRY domain. Ser-341 is modified (phosphoserine).

Belongs to the TRIM/RBCC family. As to quaternary structure, homo-multimer; required for antiviral activity. Interacts with PML. Phosphorylated. Phosphorylation is necessary for nuclear localization.

Its subcellular location is the cytoplasm. It is found in the nucleus. The protein resides in the nucleus speckle. The protein localises to the cytoskeleton. It localises to the microtubule organizing center. Its subcellular location is the centrosome. It catalyses the reaction S-ubiquitinyl-[E2 ubiquitin-conjugating enzyme]-L-cysteine + [acceptor protein]-L-lysine = [E2 ubiquitin-conjugating enzyme]-L-cysteine + N(6)-ubiquitinyl-[acceptor protein]-L-lysine.. Its pathway is protein modification; protein ubiquitination. E3 ubiquitin ligase that plays an important role in antiviral immunity by restricting different viral infections including dengue virus or vesicular stomatitis indiana virus. Ubiquitinates viral proteins such as dengue virus NS3 thereby limiting infection. In addition, acts as a key mediator of type I interferon induced microtubule stabilization by directly associating to microtubules independently of its E3 ligase activity. Also plays a role in cataract formation together with TP53. Mechanistically, inhibits UVB-induced cell apoptosis and reactive oxygen species (ROS) production by inducing TP53 ubiquitination. Regulates centrosome dynamics and mitotic progression by ubiquitinating STK3/MST2; leading to its redistribution to the perinuclear cytoskeleton and subsequent phosphorylation by PLK1. The polypeptide is E3 ubiquitin-protein ligase TRIM69 (Trim69) (Rattus norvegicus (Rat)).